The following is a 199-amino-acid chain: Superoxide dismutase [Mn] 2 (199 aa).

Mn(2+) contacts are provided by histidine 28, histidine 75, aspartate 157, and histidine 161.

It belongs to the iron/manganese superoxide dismutase family. It depends on Mn(2+) as a cofactor.

It carries out the reaction 2 superoxide + 2 H(+) = H2O2 + O2. Its function is as follows. Destroys superoxide anion radicals which are normally produced within the cells and which are toxic to biological systems. The polypeptide is Superoxide dismutase [Mn] 2 (sod2) (Haloferax volcanii (strain ATCC 29605 / DSM 3757 / JCM 8879 / NBRC 14742 / NCIMB 2012 / VKM B-1768 / DS2) (Halobacterium volcanii)).